The sequence spans 331 residues: Ferredoxin--NADP reductase 2 (331 aa).

The FAD site is built by glutamate 37, glutamine 45, tyrosine 50, valine 90, phenylalanine 124, aspartate 286, and threonine 327.

The protein belongs to the ferredoxin--NADP reductase type 2 family. As to quaternary structure, homodimer. Requires FAD as cofactor.

It catalyses the reaction 2 reduced [2Fe-2S]-[ferredoxin] + NADP(+) + H(+) = 2 oxidized [2Fe-2S]-[ferredoxin] + NADPH. In Listeria innocua serovar 6a (strain ATCC BAA-680 / CLIP 11262), this protein is Ferredoxin--NADP reductase 2.